Consider the following 830-residue polypeptide: Probable mixed-linked glucan synthase 7 (830 aa).

Transmembrane regions (helical) follow at residues 61–81 and 98–118; these read LTIF…ITYA and AATF…MWVL. Residue aspartate 186 is part of the active site. A coiled-coil region spans residues 251-279; it reads ELVRDRRRVRREYEEMRLRIDALQAADAR. Substrate is bound by residues aspartate 367 and aspartate 369. Aspartate 529 is a catalytic residue. The next 6 membrane-spanning stretches (helical) occupy residues 613 to 633, 638 to 658, 676 to 696, 735 to 755, 776 to 796, and 805 to 825; these read LFLM…GGGW, TPTY…VAVL, FWMV…ALKV, ALMA…AAAG, LPVA…LGLM, and PILF…CLLL.

The protein belongs to the glycosyltransferase 2 family. Plant cellulose synthase-like F subfamily. In terms of tissue distribution, expressed in mature pollen.

Its subcellular location is the golgi apparatus membrane. Its function is as follows. May catalyze both beta-1,3 and beta-1,4 glycosidic linkage on beta-D-glucan. Essential for (1,3;1,4)-beta-D-glucans synthesis in grasses and cereals (Poaceae). The mixed-linked glucans (which are not present in walls of dicotyledons or most other monocotyledonous plants) are particularly important constituents of the walls of the starchy endosperm and aleurone cells of cereal grains such as oats, wheat, rice and barley. They can account for up to 70% by weight of the wall. The polypeptide is Probable mixed-linked glucan synthase 7 (CSLF7) (Oryza sativa subsp. japonica (Rice)).